The primary structure comprises 446 residues: Iron-sulfur cluster assembly SufBD family protein PH1385 (446 aa).

Belongs to the iron-sulfur cluster assembly SufBD family.

This chain is Iron-sulfur cluster assembly SufBD family protein PH1385, found in Pyrococcus horikoshii (strain ATCC 700860 / DSM 12428 / JCM 9974 / NBRC 100139 / OT-3).